The sequence spans 480 residues: Gasdermin-C4 (480 aa).

The tract at residues 1-226 (MGYSFDRASK…TCVILPSATK (226 aa)) is triggers pyroptosis.

Belongs to the gasdermin family. As to quaternary structure, homooligomer; homooligomeric ring-shaped pore complex containing 27-28 subunits when inserted in the membrane. Post-translationally, cleavage by CASP8 relieves autoinhibition by releasing the N-terminal moiety (Gasdermin-C4, N-terminal) that initiates pyroptosis. Palmitoylated.

The protein localises to the cytoplasm. Its subcellular location is the cytosol. It is found in the cell membrane. With respect to regulation, the full-length protein before cleavage is inactive: intramolecular interactions between N- and C-terminal domains mediate autoinhibition in the absence of activation signal. The intrinsic pyroptosis-inducing activity is carried by the released N-terminal moiety (Gasdermin-C4, N-terminal) following cleavage by caspase CASP8. In terms of biological role, this form constitutes the precursor of the pore-forming protein: upon cleavage, the released N-terminal moiety (Gasdermin-C4, N-terminal) binds to membranes and forms pores, triggering pyroptosis. Its function is as follows. Pore-forming protein that causes membrane permeabilization and pyroptosis. Produced by the cleavage of gasdermin-C4 by caspase CASP8 in response to death signals. After cleavage, moves to the plasma membrane where it strongly binds to membrane inner leaflet lipids. Homooligomerizes within the membrane and forms pores of 10-15 nanometers (nm) of inner diameter, triggering pyroptosis. The polypeptide is Gasdermin-C4 (Mus musculus (Mouse)).